The chain runs to 218 residues: Probable signal peptidase I-2 (218 aa).

The Cytoplasmic segment spans residues 1 to 26 (MTENIVRETSKKKESPPENTWLELGK). Residues 27 to 43 (TMVTAVILAIGIRTFVA) traverse the membrane as a helical segment. The Periplasmic portion of the chain corresponds to 44–218 (EARYIPSSSM…ISPQTVPESR (175 aa)). Residues Ser-52 and Lys-100 contribute to the active site.

Belongs to the peptidase S26 family.

It localises to the cell membrane. It catalyses the reaction Cleavage of hydrophobic, N-terminal signal or leader sequences from secreted and periplasmic proteins.. This chain is Probable signal peptidase I-2 (lepB2), found in Synechocystis sp. (strain ATCC 27184 / PCC 6803 / Kazusa).